The following is a 481-amino-acid chain: Cobyric acid synthase (481 aa).

The region spanning 248–435 (NTVIAVPMLP…LHGLFHGGAF (188 aa)) is the GATase cobBQ-type domain. Catalysis depends on Cys329, which acts as the Nucleophile. Residue His427 is part of the active site.

It belongs to the CobB/CobQ family. CobQ subfamily.

It participates in cofactor biosynthesis; adenosylcobalamin biosynthesis. In terms of biological role, catalyzes amidations at positions B, D, E, and G on adenosylcobyrinic A,C-diamide. NH(2) groups are provided by glutamine, and one molecule of ATP is hydrogenolyzed for each amidation. The protein is Cobyric acid synthase of Granulibacter bethesdensis (strain ATCC BAA-1260 / CGDNIH1).